The sequence spans 537 residues: Tyrosine-protein kinase Fyn (537 aa).

Glycine 2 carries the N-myristoyl glycine lipid modification. S-palmitoyl cysteine attachment occurs at residues cysteine 3 and cysteine 6. Threonine 12 bears the Phosphothreonine; by PKC mark. Residues leucine 14–threonine 35 are disordered. Phosphoserine occurs at positions 21 and 26. The SH3 domain maps to threonine 82–serine 143. Residues tryptophan 149–cysteine 246 form the SH2 domain. Tyrosine 185 carries the phosphotyrosine modification. The region spanning leucine 271–phenylalanine 524 is the Protein kinase domain. Residues leucine 277–valine 285 and lysine 299 contribute to the ATP site. The active-site Proton acceptor is aspartate 390. Tyrosine 420 is modified (phosphotyrosine; by autocatalysis). Residue tyrosine 531 is modified to Phosphotyrosine; by CSK.

It belongs to the protein kinase superfamily. Tyr protein kinase family. SRC subfamily. As to quaternary structure, interacts (via its SH3 domain) with PIK3R1 and PRMT8. Interacts with FYB1, PAG1, and SH2D1A. Interacts with CD79A (tyrosine-phosphorylated form); the interaction increases FYN activity. Interacts (via SH2 domain) with CSF1R (tyrosine phosphorylated). Interacts with TOM1L1 (phosphorylated form). Interacts with KDR (tyrosine phosphorylated). Interacts (via SH3 domain) with KLHL2 (via N-terminus). Interacts with SH2D1A and SLAMF1. Interacts with ITCH; the interaction phosphorylates ITCH and negatively regulates its activity. Interacts with FASLG. Interacts with RUNX3. Interacts with KIT. Interacts with EPHA8; possible downstream effector of EPHA8 in regulation of cell adhesion. Interacts with PTK2/FAK1; this interaction leads to PTK2/FAK1 phosphorylation and activation. Interacts with CAV1; this interaction couples integrins to the Ras-ERK pathway. Interacts with UNC119. Interacts (via SH2 domain) with PTPRH (phosphorylated form). Interacts with PTPRO (phosphorylated form). Interacts with PTPRB (phosphorylated form). Interacts with FYB2. Interacts with DSCAM. Interacts with SKAP1 and FYB1; this interaction promotes the phosphorylation of CLNK. Interacts with NEDD9; in the presence of PTK2. Requires Mn(2+) as cofactor. In terms of processing, autophosphorylated at Tyr-420. Phosphorylation on the C-terminal tail at Tyr-531 by CSK maintains the enzyme in an inactive state. PTPRC/CD45 dephosphorylates Tyr-531 leading to activation. Ultraviolet B (UVB) strongly increase phosphorylation at Thr-12 and kinase activity, and promotes translocation from the cytoplasm to the nucleus. Dephosphorylation at Tyr-420 by PTPN2 negatively regulates T-cell receptor signaling. Phosphorylated at tyrosine residues, which can be enhanced by NTN1. Palmitoylated. Palmitoylation at Cys-3 and Cys-6, probably by ZDHHC21, regulates subcellular location.

It is found in the cytoplasm. The protein localises to the nucleus. It localises to the cell membrane. The protein resides in the perikaryon. The catalysed reaction is L-tyrosyl-[protein] + ATP = O-phospho-L-tyrosyl-[protein] + ADP + H(+). Its activity is regulated as follows. Inhibited by phosphorylation of Tyr-531 by leukocyte common antigen and activated by dephosphorylation of this site. Non-receptor tyrosine-protein kinase that plays a role in many biological processes including regulation of cell growth and survival, cell adhesion, integrin-mediated signaling, cytoskeletal remodeling, cell motility, immune response and axon guidance. Inactive FYN is phosphorylated on its C-terminal tail within the catalytic domain. Following activation by PKA, the protein subsequently associates with PTK2/FAK1, allowing PTK2/FAK1 phosphorylation, activation and targeting to focal adhesions. Involved in the regulation of cell adhesion and motility through phosphorylation of CTNNB1 (beta-catenin) and CTNND1 (delta-catenin). Regulates cytoskeletal remodeling by phosphorylating several proteins including the actin regulator WAS and the microtubule-associated proteins MAP2 and MAPT. Promotes cell survival by phosphorylating AGAP2/PIKE-A and preventing its apoptotic cleavage. Participates in signal transduction pathways that regulate the integrity of the glomerular slit diaphragm (an essential part of the glomerular filter of the kidney) by phosphorylating several slit diaphragm components including NPHS1, KIRREL1 and TRPC6. Plays a role in neural processes by phosphorylating DPYSL2, a multifunctional adapter protein within the central nervous system, ARHGAP32, a regulator for Rho family GTPases implicated in various neural functions, and SNCA, a small pre-synaptic protein. Involved in reelin signaling by mediating phosphorylation of DAB1 following reelin (RELN)-binding to its receptor. Participates in the downstream signaling pathways that lead to T-cell differentiation and proliferation following T-cell receptor (TCR) stimulation. Phosphorylates PTK2B/PYK2 in response to T-cell receptor activation. Also participates in negative feedback regulation of TCR signaling through phosphorylation of PAG1, thereby promoting interaction between PAG1 and CSK and recruitment of CSK to lipid rafts. CSK maintains LCK and FYN in an inactive form. Promotes CD28-induced phosphorylation of VAV1. In mast cells, phosphorylates CLNK after activation of immunoglobulin epsilon receptor signaling. Can also promote CD244-mediated NK cell activation. The polypeptide is Tyrosine-protein kinase Fyn (Bos taurus (Bovine)).